Consider the following 150-residue polypeptide: Urease accessory protein UreE (150 aa).

This sequence belongs to the UreE family.

Its subcellular location is the cytoplasm. Functionally, involved in urease metallocenter assembly. Binds nickel. Probably functions as a nickel donor during metallocenter assembly. This is Urease accessory protein UreE from Staphylococcus carnosus (strain TM300).